The sequence spans 45 residues: Photosystem II reaction center protein K (45 aa).

Positions 1–8 (MELMLLFA) are excised as a propeptide. A helical membrane pass occupies residues 24–44 (LPVIPVLFLALAFVWQASVGF).

This sequence belongs to the PsbK family. In terms of assembly, PSII is composed of 1 copy each of membrane proteins PsbA, PsbB, PsbC, PsbD, PsbE, PsbF, PsbH, PsbI, PsbJ, PsbK, PsbL, PsbM, PsbT, PsbX, PsbY, PsbZ, Psb30/Ycf12, peripheral proteins PsbO, CyanoQ (PsbQ), PsbU, PsbV and a large number of cofactors. It forms dimeric complexes.

The protein resides in the cellular thylakoid membrane. Its function is as follows. One of the components of the core complex of photosystem II (PSII). PSII is a light-driven water:plastoquinone oxidoreductase that uses light energy to abstract electrons from H(2)O, generating O(2) and a proton gradient subsequently used for ATP formation. It consists of a core antenna complex that captures photons, and an electron transfer chain that converts photonic excitation into a charge separation. The sequence is that of Photosystem II reaction center protein K from Cyanothece sp. (strain PCC 7425 / ATCC 29141).